The chain runs to 497 residues: Glycerol kinase (497 aa).

Threonine 21 contributes to the ADP binding site. ATP-binding residues include threonine 21 and threonine 22. Residue threonine 21 participates in sn-glycerol 3-phosphate binding. Arginine 25 provides a ligand contact to ADP. Residues arginine 88, glutamate 89, tyrosine 140, and aspartate 244 each coordinate sn-glycerol 3-phosphate. The glycerol site is built by arginine 88, glutamate 89, tyrosine 140, aspartate 244, and glutamine 245. ADP contacts are provided by threonine 266 and glycine 309. Positions 266, 309, 313, and 410 each coordinate ATP. Glycine 410 and asparagine 414 together coordinate ADP.

Belongs to the FGGY kinase family.

The enzyme catalyses glycerol + ATP = sn-glycerol 3-phosphate + ADP + H(+). Its pathway is polyol metabolism; glycerol degradation via glycerol kinase pathway; sn-glycerol 3-phosphate from glycerol: step 1/1. With respect to regulation, inhibited by fructose 1,6-bisphosphate (FBP). Its function is as follows. Key enzyme in the regulation of glycerol uptake and metabolism. Catalyzes the phosphorylation of glycerol to yield sn-glycerol 3-phosphate. This Gloeobacter violaceus (strain ATCC 29082 / PCC 7421) protein is Glycerol kinase.